The chain runs to 803 residues: MTFNHKKMEPKWQQYWSEHNTFKTTEDKDKENFYALDMFPYPSGAGLHVGHPEGYTATDILSRMKRMQGKNVLHPIGWDAFGLPAEQYAIDTGNDPEEFTALNIANFTRQIKSLGFSYDWDREINTTDPEYYKWTQWIFEKLYENGLAYEAEIAVNWCPALGTVLANEEVIDGKSERGGFPVFRKPMRQWMLKITAYADRLLDDLDLVDWPENIKDMQRNWIGRSEGAEVTFKIKDSDETFNVFTTRPDTLFGATYTVFAPEHELIEKITTPEQKEAVETYKKQVELKSELERTDLAKDKTGVFTGAYAINPINGEEVPIWIADYVLIQYGTGAIMAVPAHDERDFEFAQQFGLNIRPVLEGGDVTKEAFTGDGPHINSEFLDGLAKEEAITAAIDWLEKEGIGSRKITYRLRDWLFSRQRYWGEPIPVIHWEDGETTLVPEEELPLLLPKATEIKPSGTGESPLANLHDWVNVTDESGRKGRRETNTMPQWAGSSWYFLRYIDPKNTEAIADKEKLIEWLPVDVYIGGAEHAVLHLLYARFWHKFLYDIGVVPTKEPFQKLFNQGMILGENNEKMSKSRGNVVNPDEVVEKYGADTLRMYEMFMGPLDASIAWNENGLEGARKFLDRIWRLFVTEEGILAEKVTTTANANLEKAYHHMVKTVTNHYENLRFNTGISQLMIFINEAYKQDSIPKEYVEGFVQLLSPIAPHLAEELWEILGHTETISYVTWPTYDETKLVEDEVEIVLQVNGKVKSKITVAKSLGKEELEKIAQEDDKMKENLEGKTIRKVIVVPGKLVNIVGN.

The 'HIGH' region motif lies at 40–51; the sequence is PYPSGAGLHVGH. A 'KMSKS' region motif is present at residues 575 to 579; the sequence is KMSKS. Lysine 578 is a binding site for ATP.

Belongs to the class-I aminoacyl-tRNA synthetase family.

The protein resides in the cytoplasm. It carries out the reaction tRNA(Leu) + L-leucine + ATP = L-leucyl-tRNA(Leu) + AMP + diphosphate. The chain is Leucine--tRNA ligase from Listeria welshimeri serovar 6b (strain ATCC 35897 / DSM 20650 / CCUG 15529 / CIP 8149 / NCTC 11857 / SLCC 5334 / V8).